Here is a 305-residue protein sequence, read N- to C-terminus: Homoserine O-succinyltransferase (305 aa).

The active-site Acyl-thioester intermediate is C142. Substrate-binding residues include K163 and S192. Residue H235 is the Proton acceptor of the active site. The active site involves E237. R249 contributes to the substrate binding site.

The protein belongs to the MetA family.

It localises to the cytoplasm. It catalyses the reaction L-homoserine + succinyl-CoA = O-succinyl-L-homoserine + CoA. Its pathway is amino-acid biosynthesis; L-methionine biosynthesis via de novo pathway; O-succinyl-L-homoserine from L-homoserine: step 1/1. Transfers a succinyl group from succinyl-CoA to L-homoserine, forming succinyl-L-homoserine. The sequence is that of Homoserine O-succinyltransferase from Psychromonas ingrahamii (strain DSM 17664 / CCUG 51855 / 37).